Here is a 483-residue protein sequence, read N- to C-terminus: Uridine/cytidine kinase UKL1, chloroplastic (483 aa).

The N-terminal 47 residues, Met1–Asn47, are a transit peptide targeting the chloroplast. Positions Pro59–Gly264 are uridine kinase. The uracil phosphoribosyltransferase stretch occupies residues Asn274–Glu483. GTP contacts are provided by residues Lys298, Arg307, and Cys341–Leu344. Residues Arg351 and Arg376 each coordinate 5-phospho-alpha-D-ribose 1-diphosphate. Arg396 provides a ligand contact to GTP. 5-phospho-alpha-D-ribose 1-diphosphate contacts are provided by residues Asp402, Thr407–Ser410, and Glu473. Gly472 to Phe474 contributes to the uracil binding site.

The protein in the N-terminal section; belongs to the uridine kinase family. It in the C-terminal section; belongs to the UPRTase family.

The protein localises to the plastid. It is found in the chloroplast. The catalysed reaction is cytidine + ATP = CMP + ADP + H(+). It catalyses the reaction uridine + ATP = UMP + ADP + H(+). It participates in pyrimidine metabolism; CTP biosynthesis via salvage pathway; CTP from cytidine: step 1/3. It functions in the pathway pyrimidine metabolism; UMP biosynthesis via salvage pathway; UMP from uridine: step 1/1. In terms of biological role, involved in the pyrimidine salvage pathway. Phosphorylates uridine to uridine monophosphate (UMP). Phosphorylates cytidine to cytidine monophosphate (CMP). Does not possess uracil phosphoribosyltransferase (UPRTase) activity that catalyzes the conversion of uracil and 5-phospho-alpha-D-ribose 1-diphosphate (PRPP) to UMP and diphosphate. The protein is Uridine/cytidine kinase UKL1, chloroplastic of Arabidopsis thaliana (Mouse-ear cress).